We begin with the raw amino-acid sequence, 259 residues long: Hemin import ATP-binding protein HmuV (259 aa).

Positions I2–Q238 constitute an ABC transporter domain. G34 to S41 is an ATP binding site.

It belongs to the ABC transporter superfamily. Heme (hemin) importer (TC 3.A.1.14.5) family. As to quaternary structure, the complex is composed of two ATP-binding proteins (HmuV), two transmembrane proteins (HmuU) and a solute-binding protein (HmuT).

It is found in the cell inner membrane. Part of the ABC transporter complex HmuTUV involved in hemin import. Responsible for energy coupling to the transport system. This is Hemin import ATP-binding protein HmuV from Chelativorans sp. (strain BNC1).